The following is a 435-amino-acid chain: MVDEDKKSGTRVFKKTSPNGKITTYLGKRDFIDRGDYVDLIDGMVLIDEEYIKDNRKVTAHLLAAFRYGREDLDVLGLTFRKDLISETFQVYPQTDKSISRPLSRLQERLKRKLGANAFPFWFEVAPKSASSVTLQPAPGDTGKPCGVDYELKTFVAVTDGSSGEKPKKSALSNTVRLAIRKLTYAPFESRPQPMVDVSKYFMMSSGLLHMEVSLDKEMYYHGESISVNVHIQNNSNKTVKKLKIYIIQVADICLFTTASYSCEVARIESNEGFPVGPGGTLSKVFAVCPLLSNNKDKRGLALDGQLKHEDTNLASSTILDSKTSKESLGIVVQYRVKVRAVLGPLNGELFAELPFTLTHSKPPESPERTDRGLPSIEATNGSEPVDIDLIQLHEELEPRYDDDLIFEDFARMRLHGNDSEDQPSPSANLPPSLL.

The segment at 358–382 is disordered; sequence LTHSKPPESPERTDRGLPSIEATNG. Basic and acidic residues predominate over residues 362 to 372; sequence KPPESPERTDR. Positions 390-394 match the Clathrin box motif; it reads LIQLH. The [DE]-X(1,2)-F-X-X-[FL]-X-X-X-R motif signature appears at 404 to 414; the sequence is DLIFEDFARMR. A disordered region spans residues 416–435; that stretch reads HGNDSEDQPSPSANLPPSLL. Residues 424-435 are compositionally biased toward low complexity; that stretch reads PSPSANLPPSLL.

This sequence belongs to the arrestin family. Component of a complex composed of arr-1, daf-18 and mpz-1. Within the complex, interacts (via C-terminus) with mpz-1 (via PDZ domain) and phosphatase daf-18. May interact (via C-terminus) with clathrin chc-1 and beta-2 adaptin (AP2) apb-1. As to expression, expressed in head neurons, nerve ring and ventral nerve cord (at protein level). Expressed in the nervous system including the nerve ring and the ventral and dorsal nerve cords. Highly expressed in amphid chemosensory neurons AWA, AWB, AWC, ADL and ASH, and in hermaphrodite specific neuron HSN. Also expressed in the intestine.

It is found in the perikaryon. The protein localises to the cell projection. It localises to the dendrite. Its function is as follows. Adapter protein required for olfactory adaptation and recovery to volatile odorants, probably by desensitization of G-protein coupled receptors (GPCR). May play a role in clathrin-mediated GPCR endocytosis. Acts as a positive regulator of insulin-like daf-2 signaling pathway probably by forming a complex with mpz-1 and phosphatase daf-18 likely resulting in daf-18 inhibition. Involved in egg-laying. The sequence is that of Beta-arrestin arr-1 from Caenorhabditis elegans.